The following is a 170-amino-acid chain: Crossover junction endodeoxyribonuclease RuvC (170 aa).

Active-site residues include Asp-9, Glu-70, and Asp-145. Asp-9, Glu-70, and Asp-145 together coordinate Mg(2+).

This sequence belongs to the RuvC family. In terms of assembly, homodimer which binds Holliday junction (HJ) DNA. The HJ becomes 2-fold symmetrical on binding to RuvC with unstacked arms; it has a different conformation from HJ DNA in complex with RuvA. In the full resolvosome a probable DNA-RuvA(4)-RuvB(12)-RuvC(2) complex forms which resolves the HJ. Requires Mg(2+) as cofactor.

The protein localises to the cytoplasm. The catalysed reaction is Endonucleolytic cleavage at a junction such as a reciprocal single-stranded crossover between two homologous DNA duplexes (Holliday junction).. The RuvA-RuvB-RuvC complex processes Holliday junction (HJ) DNA during genetic recombination and DNA repair. Endonuclease that resolves HJ intermediates. Cleaves cruciform DNA by making single-stranded nicks across the HJ at symmetrical positions within the homologous arms, yielding a 5'-phosphate and a 3'-hydroxyl group; requires a central core of homology in the junction. The consensus cleavage sequence is 5'-(A/T)TT(C/G)-3'. Cleavage occurs on the 3'-side of the TT dinucleotide at the point of strand exchange. HJ branch migration catalyzed by RuvA-RuvB allows RuvC to scan DNA until it finds its consensus sequence, where it cleaves and resolves the cruciform DNA. This Chlamydia muridarum (strain MoPn / Nigg) protein is Crossover junction endodeoxyribonuclease RuvC.